A 158-amino-acid polypeptide reads, in one-letter code: MIYDKIDTKLIKLGKTNKFSGEEEKSITSLYYEDESFEFSFKNKYVKITKIETNAYGKKFVTIKSKLYADIVEKVAKELDAVSPILSDGSFRATINDATSFSKDVGEYSFYACVSLYFPSIYKDTEKTTLQVYLKEVVVTKIIKNNLEVEFDKLSLAI.

Functionally, the presence of the two linear plasmids, termed pGKL1 and pGKL2, in strains of Kluyveromyces lactis confers the killer phenotype to the host cell, by promoting the secretion of a toxin able to inhibit the growth of sensitive strains. This is an uncharacterized protein from Kluyveromyces lactis (strain ATCC 8585 / CBS 2359 / DSM 70799 / NBRC 1267 / NRRL Y-1140 / WM37) (Yeast).